A 177-amino-acid chain; its full sequence is Large ribosomal subunit protein eL20 (177 aa).

Belongs to the eukaryotic ribosomal protein eL20 family.

The sequence is that of Large ribosomal subunit protein eL20 (RpL18A) from Drosophila melanogaster (Fruit fly).